We begin with the raw amino-acid sequence, 375 residues long: Type II restriction enzyme ApaLI (375 aa).

It catalyses the reaction Endonucleolytic cleavage of DNA to give specific double-stranded fragments with terminal 5'-phosphates.. A subtype P restriction enzyme that recognizes the double-stranded sequence 5'-GTGCAC-3' and cleaves after G-1. The polypeptide is Type II restriction enzyme ApaLI (Acetobacter pasteurianus (Acetobacter turbidans)).